Reading from the N-terminus, the 186-residue chain is NADH-ubiquinone oxidoreductase 17.8 kDa subunit, mitochondrial (186 aa).

A mitochondrion-targeting transit peptide spans 1-26; it reads MSSFRLGVSRVARQVRAPCVRNTRRY. Residues 22–49 are disordered; sequence NTRRYASDSHAPADHTHSAAGHGEHHHA. Basic and acidic residues predominate over residues 26-49; it reads YASDSHAPADHTHSAAGHGEHHHA. A helical membrane pass occupies residues 58–78; that stretch reads LGTAFYVIFGAIPAFGALYYF.

Complex I is composed of about 40 different subunits.

It localises to the mitochondrion inner membrane. It carries out the reaction a ubiquinone + NADH + 5 H(+)(in) = a ubiquinol + NAD(+) + 4 H(+)(out). Functionally, transfer of electrons from NADH to the respiratory chain. The immediate electron acceptor for the enzyme is believed to be ubiquinone. This chain is NADH-ubiquinone oxidoreductase 17.8 kDa subunit, mitochondrial (nuo17.8), found in Neurospora crassa (strain ATCC 24698 / 74-OR23-1A / CBS 708.71 / DSM 1257 / FGSC 987).